The primary structure comprises 163 residues: NADH-quinone oxidoreductase subunit I (163 aa).

2 4Fe-4S ferredoxin-type domains span residues 54 to 84 (LRRY…IDSA) and 94 to 123 (TRYD…ETHI). [4Fe-4S] cluster-binding residues include C64, C67, C70, C74, C103, C106, C109, and C113.

Belongs to the complex I 23 kDa subunit family. NDH-1 is composed of 14 different subunits. Subunits NuoA, H, J, K, L, M, N constitute the membrane sector of the complex. [4Fe-4S] cluster is required as a cofactor.

It localises to the cell inner membrane. It carries out the reaction a quinone + NADH + 5 H(+)(in) = a quinol + NAD(+) + 4 H(+)(out). In terms of biological role, NDH-1 shuttles electrons from NADH, via FMN and iron-sulfur (Fe-S) centers, to quinones in the respiratory chain. The immediate electron acceptor for the enzyme in this species is believed to be ubiquinone. Couples the redox reaction to proton translocation (for every two electrons transferred, four hydrogen ions are translocated across the cytoplasmic membrane), and thus conserves the redox energy in a proton gradient. This chain is NADH-quinone oxidoreductase subunit I, found in Xanthomonas oryzae pv. oryzae (strain KACC10331 / KXO85).